A 274-amino-acid polypeptide reads, in one-letter code: NAD kinase (274 aa).

Asp50 functions as the Proton acceptor in the catalytic mechanism. NAD(+)-binding positions include Asp50–Gly51, Asn126–Glu127, Arg152, Asp154, Thr165–Ser170, and Ala189.

It belongs to the NAD kinase family. Requires a divalent metal cation as cofactor.

Its subcellular location is the cytoplasm. It carries out the reaction NAD(+) + ATP = ADP + NADP(+) + H(+). Involved in the regulation of the intracellular balance of NAD and NADP, and is a key enzyme in the biosynthesis of NADP. Catalyzes specifically the phosphorylation on 2'-hydroxyl of the adenosine moiety of NAD to yield NADP. The chain is NAD kinase from Streptococcus gordonii (strain Challis / ATCC 35105 / BCRC 15272 / CH1 / DL1 / V288).